The primary structure comprises 220 residues: Adenylate kinase (220 aa).

10-15 (GAGKGT) contacts ATP. Residues 30 to 59 (STGDMLRAAVKAGTPLGLKAKEVMDGGNLV) are NMP. AMP-binding positions include threonine 31, arginine 36, 57 to 59 (NLV), 85 to 88 (GFPR), and glutamine 92. Positions 122–159 (GRRVHPASGRTYHIRFNPPQTAGMDDETGEPLVQRADD) are LID. Residues arginine 123 and 132–133 (TY) each bind ATP. AMP contacts are provided by arginine 156 and arginine 167. Glycine 205 lines the ATP pocket.

This sequence belongs to the adenylate kinase family. Monomer.

It localises to the cytoplasm. The catalysed reaction is AMP + ATP = 2 ADP. It participates in purine metabolism; AMP biosynthesis via salvage pathway; AMP from ADP: step 1/1. Functionally, catalyzes the reversible transfer of the terminal phosphate group between ATP and AMP. Plays an important role in cellular energy homeostasis and in adenine nucleotide metabolism. The chain is Adenylate kinase from Chlorobium luteolum (strain DSM 273 / BCRC 81028 / 2530) (Pelodictyon luteolum).